The sequence spans 113 residues: Small ribosomal subunit protein uS14m (113 aa).

This sequence belongs to the universal ribosomal protein uS14 family. In terms of assembly, component of the mitochondrial small ribosomal subunit (mt-SSU). Mature N.crassa 74S mitochondrial ribosomes consist of a small (37S) and a large (54S) subunit. The 37S small subunit contains a 16S ribosomal RNA (16S mt-rRNA) and 32 different proteins. The 54S large subunit contains a 23S rRNA (23S mt-rRNA) and 42 different proteins.

The protein localises to the mitochondrion. Functionally, component of the mitochondrial ribosome (mitoribosome), a dedicated translation machinery responsible for the synthesis of mitochondrial genome-encoded proteins, including at least some of the essential transmembrane subunits of the mitochondrial respiratory chain. The mitoribosomes are attached to the mitochondrial inner membrane and translation products are cotranslationally integrated into the membrane. This chain is Small ribosomal subunit protein uS14m (mrp2), found in Neurospora crassa (strain ATCC 24698 / 74-OR23-1A / CBS 708.71 / DSM 1257 / FGSC 987).